A 621-amino-acid chain; its full sequence is Growth factor receptor-bound protein 10 (621 aa).

Composition is skewed to polar residues over residues Met1–Asp23 and His33–Gln59. Residues Met1–Gly118 are disordered. Phosphoserine is present on residues Ser50 and Ser96. Positions Gly95–Pro112 are enriched in pro residues. Positions Leu194–Ala278 constitute a Ras-associating domain. In terms of domain architecture, PH spans Cys318–Tyr427. A Phosphoserine; by MTOR and PKB/AKT1 modification is found at Ser455. Phosphoserine occurs at positions 458 and 503. Positions Trp520–Tyr601 constitute an SH2 domain.

It belongs to the GRB7/10/14 family. In terms of assembly, interacts with ligand-activated tyrosine kinase receptors, including FGFR1, INSR, IGF1R, MET and PDGFRB in a phosphotyrosine-dependent manner through the SH2 domain. Poorly binds to the EGFR. Directly interacts with MAP3K14/NIK and is recruited to the EGFR-ERBB2 complex. Interacts with GIGYF1/PERQ1 and GIGYF2/TNRC15. When unphosphorylated, interacts with AKT1 and when phosphorylated with YWHAE/14-3-3 epsilon. Interacts with NEDD4. Interacts with LRP6, thus interfering with the binding of AXIN1 to LRP6. Binds to activated NRAS. In terms of processing, phosphorylated on serine residues upon EGF, FGF and PDGF stimulation. Widely expressed.

The protein resides in the cytoplasm. With respect to regulation, phosphorylation by mTORC1 stabilizes and activates GRB10 constituting a feedback pathway by which mTORC1 inhibits INSR-dependent signaling. In terms of biological role, adapter protein which modulates coupling of a number of cell surface receptor kinases with specific signaling pathways. Binds to, and suppress signals from, activated receptors tyrosine kinases, including the insulin (INSR) and insulin-like growth factor (IGF1R) receptors. The inhibitory effect can be achieved by 2 mechanisms: interference with the signaling pathway and increased receptor degradation. Delays and reduces AKT1 phosphorylation in response to insulin stimulation. Blocks association between INSR and IRS1 and IRS2 and prevents insulin-stimulated IRS1 and IRS2 tyrosine phosphorylation. Recruits NEDD4 to IGF1R, leading to IGF1R ubiquitination, increased internalization and degradation by both the proteasomal and lysosomal pathways. A similar role in the mediation of ubiquitination also has been suggested with INSR. Negatively regulates Wnt signaling by interacting with LRP6 intracellular portion and interfering with the binding of AXIN1 to LRP6. Positive regulator of the KDR/VEGFR-2 signaling pathway. May inhibit NEDD4-mediated degradation of KDR/VEGFR-2. This is Growth factor receptor-bound protein 10 (Grb10) from Mus musculus (Mouse).